Reading from the N-terminus, the 276-residue chain is Large ribosomal subunit protein uL2 (276 aa).

The segment at glycine 210–lysine 276 is disordered. Basic and acidic residues predominate over residues aspartate 230 to lysine 240. A compositionally biased stretch (basic residues) spans lysine 255–lysine 276.

The protein belongs to the universal ribosomal protein uL2 family. Part of the 50S ribosomal subunit. Forms a bridge to the 30S subunit in the 70S ribosome.

One of the primary rRNA binding proteins. Required for association of the 30S and 50S subunits to form the 70S ribosome, for tRNA binding and peptide bond formation. It has been suggested to have peptidyltransferase activity; this is somewhat controversial. Makes several contacts with the 16S rRNA in the 70S ribosome. This Campylobacter jejuni subsp. jejuni serotype O:6 (strain 81116 / NCTC 11828) protein is Large ribosomal subunit protein uL2.